The following is a 124-amino-acid chain: Small ribosomal subunit protein bS6 (124 aa).

Residues 99–124 (PLPAPRVMPGSEAAQQQQAEAAASAD) form a disordered region. Over residues 109 to 124 (SEAAQQQQAEAAASAD) the composition is skewed to low complexity.

The protein belongs to the bacterial ribosomal protein bS6 family.

Binds together with bS18 to 16S ribosomal RNA. The sequence is that of Small ribosomal subunit protein bS6 from Synechococcus sp. (strain CC9605).